Consider the following 205-residue polypeptide: Ribosome maturation factor RimP (205 aa).

A compositionally biased stretch (polar residues) spans 1 to 13 (MSNAEATTSSDRT). Residues 1 to 27 (MSNAEATTSSDRTGTGKAEAESVHNPE) are disordered. The span at 18-27 (AEAESVHNPE) shows a compositional bias: basic and acidic residues.

Belongs to the RimP family.

The protein resides in the cytoplasm. Its function is as follows. Required for maturation of 30S ribosomal subunits. This chain is Ribosome maturation factor RimP, found in Arthrobacter sp. (strain FB24).